The primary structure comprises 1775 residues: Atrochrysone carboxylic acid synthase (1775 aa).

The Starter acyltransferase (SAT) domain maps to L35–F262. The Ketosynthase family 3 (KS3) domain occupies D400–E833. Catalysis depends on for beta-ketoacyl synthase activity residues C573, H708, and H750. Residues F934–S1244 form the Malonyl-CoA:ACP transacylase (MAT) domain. The tract at residues T1313–P1631 is product template (PT) domain. An N-terminal hotdog fold region spans residues H1317 to N1451. The 310-residue stretch at H1317 to P1626 folds into the PKS/mFAS DH domain. H1349 acts as the Proton acceptor; for dehydratase activity in catalysis. The segment at A1480–P1626 is C-terminal hotdog fold. The active-site Proton donor; for dehydratase activity is the D1537. The segment at T1671–A1697 is disordered. The segment covering P1688–A1697 has biased composition (low complexity). A Carrier domain is found at A1697–F1774. S1734 is modified (O-(pantetheine 4'-phosphoryl)serine).

It catalyses the reaction holo-[ACP] + 8 malonyl-CoA + 8 H(+) = atrochrysone carboxyl-[ACP] + 8 CO2 + 8 CoA + 2 H2O. The protein operates within secondary metabolite biosynthesis. Its function is as follows. Non-reducing polyketide synthase; part of the gene cluster that mediates the biosynthesis of physcion, a natural anthraquinone fungicide that can prevent plant fungal infections. The pathway begins with the polyketide synthase AcPKS that condenses 8 malonyl-CoA units to synthesize atrochrysone thioester which is released from the synthase by the atrochrysone carboxyl ACP thioesterase AcTE that breaks the thioester bond and leads to free atrochrysone carboxylic acid. Spontaneous decarboxylation of atrochrysone carboxylic acid leads to the formation of atrochrysone. Then, atrochrysone undergoes spontaneous dehydration and oxidation, giving the products emodin anthrone and emodin. The O-methyltransferase AcOMT then methylates the C-6 hydroxyl of emodin to form physcion. The polypeptide is Atrochrysone carboxylic acid synthase (Aspergillus chevalieri (Eurotium chevalieri)).